A 567-amino-acid chain; its full sequence is Adenine deaminase (567 aa).

It belongs to the metallo-dependent hydrolases superfamily. Adenine deaminase family. Mn(2+) serves as cofactor.

The catalysed reaction is adenine + H2O + H(+) = hypoxanthine + NH4(+). In Methanothrix thermoacetophila (strain DSM 6194 / JCM 14653 / NBRC 101360 / PT) (Methanosaeta thermophila), this protein is Adenine deaminase.